A 267-amino-acid polypeptide reads, in one-letter code: Hydroxyethylthiazole kinase (267 aa).

M42 is a binding site for substrate. ATP-binding residues include R118 and S164. A191 is a binding site for substrate.

Belongs to the Thz kinase family. Requires Mg(2+) as cofactor.

It carries out the reaction 5-(2-hydroxyethyl)-4-methylthiazole + ATP = 4-methyl-5-(2-phosphooxyethyl)-thiazole + ADP + H(+). It participates in cofactor biosynthesis; thiamine diphosphate biosynthesis; 4-methyl-5-(2-phosphoethyl)-thiazole from 5-(2-hydroxyethyl)-4-methylthiazole: step 1/1. Catalyzes the phosphorylation of the hydroxyl group of 4-methyl-5-beta-hydroxyethylthiazole (THZ). The chain is Hydroxyethylthiazole kinase from Pasteurella multocida (strain Pm70).